The chain runs to 425 residues: D-amino acid dehydrogenase 2 (425 aa).

3–17 (ITVVGAGIVGISTAY) is an FAD binding site.

The protein belongs to the DadA oxidoreductase family. Requires FAD as cofactor.

It carries out the reaction a D-alpha-amino acid + A + H2O = a 2-oxocarboxylate + AH2 + NH4(+). In terms of biological role, oxidative deamination of D-amino acids. This is D-amino acid dehydrogenase 2 (dadA2) from Ralstonia nicotianae (strain ATCC BAA-1114 / GMI1000) (Ralstonia solanacearum).